The sequence spans 527 residues: Phospholipase A1-Igamma3, chloroplastic (527 aa).

The N-terminal 52 residues, 1-52, are a transit peptide targeting the chloroplast; the sequence is MASLSLPITLKNPRFFSSSPQNIFKTQPQTLVLTTKFKTCSIICSSSCTSIS. Positions 55-65 are enriched in low complexity; it reads TTQQKQSNKQT. Residues 55-82 are disordered; the sequence is TTQQKQSNKQTHVSDNKREEKAEEEEEE. Basic and acidic residues predominate over residues 66 to 75; sequence HVSDNKREEK. A GXSXG motif is present at residues 300-304; the sequence is GHSLG. The active-site Acyl-ester intermediate is the S302. Active-site charge relay system residues include D366 and H423.

Belongs to the AB hydrolase superfamily. Lipase family. Highly expressed in flowers. Lower levels in seedlings, leaves and stems.

The protein localises to the plastid. It localises to the chloroplast. It carries out the reaction 1,2-dihexadecanoyl-sn-glycero-3-phosphocholine + H2O = 2-hexadecanoyl-sn-glycero-3-phosphocholine + hexadecanoate + H(+). The catalysed reaction is a 1,2-diacyl-3-O-(beta-D-galactosyl)-sn-glycerol + H2O = an acyl-3-O-(beta-D-galactosyl)-sn-glycerol + a fatty acid + H(+). It catalyses the reaction a 1,2-diacyl-3-O-[alpha-D-galactosyl-(1-&gt;6)-beta-D-galactosyl]-sn-glycerol + H2O = acyl-3-O-[alpha-D-galactosyl-(1-&gt;6)-beta-D-galactosyl]-sn-glycerol + a fatty acid + H(+). Acylhydrolase that catalyzes the hydrolysis of phosphatidylcholine at the sn-1 position. Moderate activity toward phosphatidylcholine (PC), monogalactosyldiacylglycerol (MGDG), digalactosyldiacylglycerol (DGDG) and triacylglycerol (TAG). In Arabidopsis thaliana (Mouse-ear cress), this protein is Phospholipase A1-Igamma3, chloroplastic.